A 61-amino-acid chain; its full sequence is MAVQKSKPSRAKRGKRRSHDHVIQHALSIDKLSKEIHIRHHITKKGYYKGKKTLLFHLLSK.

The tract at residues 1–20 is disordered; sequence MAVQKSKPSRAKRGKRRSHD. The span at 7 to 19 shows a compositional bias: basic residues; sequence KPSRAKRGKRRSH.

The protein belongs to the bacterial ribosomal protein bL32 family.

In Buchnera aphidicola subsp. Cinara cedri (strain Cc), this protein is Large ribosomal subunit protein bL32.